The chain runs to 320 residues: Cytochrome f (320 aa).

The N-terminal stretch at 1–35 (MQTRNTFSSIKEEITRSISVSLMIYIITWAPVSNA) is a signal peptide. Heme contacts are provided by Y36, C56, C59, and H60. The chain crosses the membrane as a helical span at residues 286–306 (VQGLLFFFASVILAQIFLVLK).

This sequence belongs to the cytochrome f family. As to quaternary structure, the 4 large subunits of the cytochrome b6-f complex are cytochrome b6, subunit IV (17 kDa polypeptide, petD), cytochrome f and the Rieske protein, while the 4 small subunits are PetG, PetL, PetM and PetN. The complex functions as a dimer. Requires heme as cofactor.

The protein resides in the plastid. The protein localises to the chloroplast thylakoid membrane. In terms of biological role, component of the cytochrome b6-f complex, which mediates electron transfer between photosystem II (PSII) and photosystem I (PSI), cyclic electron flow around PSI, and state transitions. In Cucumis sativus (Cucumber), this protein is Cytochrome f.